We begin with the raw amino-acid sequence, 245 residues long: uncharacterized protein (245 aa).

Over residues 162–174 (KEQSDVTTSERTR) the composition is skewed to basic and acidic residues. Residues 162-183 (KEQSDVTTSERTRSPPGSSKTT) form a disordered region.

This is an uncharacterized protein from Homo sapiens (Human).